Reading from the N-terminus, the 691-residue chain is DNA ligase (691 aa).

Residues 41–45 (DAEYD), 90–91 (SL), and Glu-130 contribute to the NAD(+) site. Catalysis depends on Lys-132, which acts as the N6-AMP-lysine intermediate. Positions 153, 190, 307, and 331 each coordinate NAD(+). Zn(2+) contacts are provided by Cys-425, Cys-428, Cys-443, and Cys-449. The region spanning 610–691 (APQGVLAGKT…MHTLLEGHAR (82 aa)) is the BRCT domain.

The protein belongs to the NAD-dependent DNA ligase family. LigA subfamily. It depends on Mg(2+) as a cofactor. The cofactor is Mn(2+).

It carries out the reaction NAD(+) + (deoxyribonucleotide)n-3'-hydroxyl + 5'-phospho-(deoxyribonucleotide)m = (deoxyribonucleotide)n+m + AMP + beta-nicotinamide D-nucleotide.. In terms of biological role, DNA ligase that catalyzes the formation of phosphodiester linkages between 5'-phosphoryl and 3'-hydroxyl groups in double-stranded DNA using NAD as a coenzyme and as the energy source for the reaction. It is essential for DNA replication and repair of damaged DNA. The protein is DNA ligase of Burkholderia pseudomallei (strain 668).